The sequence spans 102 residues: Circadian clock protein KaiB3 (102 aa).

The protein belongs to the KaiB family. In terms of assembly, purifies as a monomer and homotetramer. Interacts with KaiC1 and KaiC3.

Functionally, a paralog of KaiB1, the major clock oscillator protein in this species. KaiB3 and KaiC3 may cross talk with the core oscillator. The monomer reduces the ATPase activity of KaiC3 by 55%, the homotetramer has no effect. In terms of biological role, a metamorphic protein which may reversibly switch between an inactive tetrameric fold and a rare thioredoxin-like monomeric fold (KaiB(fs)). The protein is Circadian clock protein KaiB3 of Synechocystis sp. (strain ATCC 27184 / PCC 6803 / Kazusa).